We begin with the raw amino-acid sequence, 333 residues long: Probable 4-hydroxyproline 2-epimerase (333 aa).

Catalysis depends on cysteine 90, which acts as the Proton acceptor. Substrate is bound by residues 91 to 92 (GH), histidine 223, and aspartate 249. Cysteine 253 (proton donor) is an active-site residue. Substrate is bound at residue 254 to 255 (GT).

Belongs to the proline racemase family.

The catalysed reaction is trans-4-hydroxy-L-proline = cis-4-hydroxy-D-proline. In terms of biological role, likely catalyzes the epimerization of trans-4-hydroxy-L-proline (t4LHyp) to cis-4-hydroxy-D-proline (c4DHyp). May be involved in the degradation pathway that converts t4LHyp to alpha-ketoglutarate, which would allow R.meliloti to grow on t4LHyp as a sole carbon source. The chain is Probable 4-hydroxyproline 2-epimerase from Rhizobium meliloti (strain 1021) (Ensifer meliloti).